The following is a 497-amino-acid chain: MHSKPSRLPFSLALRLTFFISLSTILAFIAFTWFMLHSVEKHFAEQDVSDLQQISTTLSRILQSPADPDEKKVSKIKESIASYRNVALLLLNPRGEVLYSSAQGAALRPAVNSADFSEHSRARDVFLWTVEDTARAMDTGSGMKMETYRIIASSGQATFQGKQQNYVMLTGLSINFHLHYLDALKKNLIAIAVVISLLIVLIIRIAVRQGHLPLRNVSNAIKNITSENLDARLEPTRVPIELEQLVISFNHMIGKIEDVFTRQANFSADIAHEIRTPITNLVTQTEIALSQDRTQKELEDVLYSSLEEYNRMTKMVSDMLFLAQADNNQLIPDRVRFDLQSQNSLKVFRVFSEALGPKETPILLLKFNGMPCLVEGDPQMFRRAINNLLSNALRYTPEGQAITVSIREQESFFDLVIENPGKPIPEEHLSRLFDRFYRVDPSRQRKGEGSGIGLAIVKSIVEAHHGRVQVESDVHSTRFILSVPRLEKMIPDTQCWE.

The Cytoplasmic portion of the chain corresponds to 1–15; sequence MHSKPSRLPFSLALR. Residues 16 to 36 traverse the membrane as a helical segment; the sequence is LTFFISLSTILAFIAFTWFML. Over 37-186 the chain is Periplasmic; that stretch reads HSVEKHFAEQ…HLHYLDALKK (150 aa). The helical transmembrane segment at 187–207 threads the bilayer; the sequence is NLIAIAVVISLLIVLIIRIAV. The 54-residue stretch at 208–261 folds into the HAMP domain; the sequence is RQGHLPLRNVSNAIKNITSENLDARLEPTRVPIELEQLVISFNHMIGKIEDVFT. At 208-497 the chain is on the cytoplasmic side; the sequence is RQGHLPLRNV…KMIPDTQCWE (290 aa). A Histidine kinase domain is found at 269-487; it reads DIAHEIRTPI…RFILSVPRLE (219 aa). His272 is subject to Phosphohistidine; by autocatalysis.

The protein resides in the cell inner membrane. The enzyme catalyses ATP + protein L-histidine = ADP + protein N-phospho-L-histidine.. Its function is as follows. Component of the sil cation-efflux system that confers resistance to silver. Probable member of a two-component regulatory system SilS/SilR. May activate SilR by phosphorylation. The sequence is that of Probable sensor kinase SilS (silS) from Salmonella typhimurium.